The chain runs to 301 residues: Putative S-adenosyl-L-methionine-dependent methyltransferase Mflv_5024 (301 aa).

S-adenosyl-L-methionine-binding positions include aspartate 129 and 158-159 (DL).

Belongs to the UPF0677 family.

Exhibits S-adenosyl-L-methionine-dependent methyltransferase activity. This is Putative S-adenosyl-L-methionine-dependent methyltransferase Mflv_5024 from Mycolicibacterium gilvum (strain PYR-GCK) (Mycobacterium gilvum (strain PYR-GCK)).